Reading from the N-terminus, the 525-residue chain is GMP synthase [glutamine-hydrolyzing] (525 aa).

In terms of domain architecture, Glutamine amidotransferase type-1 spans 9–202 (SILIIDFGSQ…VHKIVGLKSD (194 aa)). The Nucleophile role is filled by cysteine 86. Active-site residues include histidine 176 and glutamate 178. One can recognise a GMPS ATP-PPase domain in the interval 203 to 400 (WTMAAYRAEM…LGLPESFIGR (198 aa)). ATP is bound at residue 230-236 (SGGVDSS).

As to quaternary structure, homodimer.

It catalyses the reaction XMP + L-glutamine + ATP + H2O = GMP + L-glutamate + AMP + diphosphate + 2 H(+). The protein operates within purine metabolism; GMP biosynthesis; GMP from XMP (L-Gln route): step 1/1. In terms of biological role, catalyzes the synthesis of GMP from XMP. This is GMP synthase [glutamine-hydrolyzing] from Agrobacterium fabrum (strain C58 / ATCC 33970) (Agrobacterium tumefaciens (strain C58)).